The primary structure comprises 360 residues: Heme A synthase (360 aa).

9 consecutive transmembrane segments (helical) span residues Trp-29–Leu-49, Phe-111–Gly-131, Leu-139–Val-159, Leu-175–Gly-195, Leu-210–Ala-230, Pro-242–Ile-262, Val-269–Leu-289, Ala-309–Val-329, and Pro-330–Val-350. His-276 lines the heme pocket. His-337 is a binding site for heme.

Belongs to the COX15/CtaA family. Type 2 subfamily. As to quaternary structure, interacts with CtaB. The cofactor is heme b.

Its subcellular location is the cell membrane. It carries out the reaction Fe(II)-heme o + 2 A + H2O = Fe(II)-heme a + 2 AH2. Its pathway is porphyrin-containing compound metabolism; heme A biosynthesis; heme A from heme O: step 1/1. Its function is as follows. Catalyzes the conversion of heme O to heme A by two successive hydroxylations of the methyl group at C8. The first hydroxylation forms heme I, the second hydroxylation results in an unstable dihydroxymethyl group, which spontaneously dehydrates, resulting in the formyl group of heme A. In Methylobacterium nodulans (strain LMG 21967 / CNCM I-2342 / ORS 2060), this protein is Heme A synthase.